Consider the following 583-residue polypeptide: Probable GTP diphosphokinase CRSH, chloroplastic (583 aa).

A chloroplast-targeting transit peptide spans 1 to 58 (MSVIRPSPIPIPRCRSQVLHRRLYSIQLIQRRRRRWNPRSEVEDTAIESTARSPEAAG). The HD domain maps to 112–212 (PLSKALSLSI…MDLVSKLDEM (101 aa)). EF-hand domains follow at residues 470-505 (TTTN…LGAP) and 507-539 (EDAE…VEFM). Residues D483, N485, D487, M489, E494, D517, N519, D521, S523, and E528 each coordinate Ca(2+).

The protein belongs to the RelA/SpoT family. Expressed in shoots, cotyledons, rosette and cauline leaves, stems, sepals, pistils and siliques.

The protein localises to the plastid. It localises to the chloroplast. The enzyme catalyses GTP + ATP = guanosine 3'-diphosphate 5'-triphosphate + AMP. Activated by calcium. In terms of biological role, possesses calcium-dependent ppGpp (guanosine 3'-diphosphate 5'-diphosphate) synthetase activity in vitro and is able to functionally complement E.coli relA mutants. Plays an important role in the timing adjustment of pistil and pollen maturation required for successful pollination. May be involved in a rapid plant ppGpp-mediated response to pathogens and other stresses. The protein is Probable GTP diphosphokinase CRSH, chloroplastic (CRSH) of Arabidopsis thaliana (Mouse-ear cress).